Here is a 119-residue protein sequence, read N- to C-terminus: Holo-[acyl-carrier-protein] synthase (119 aa).

2 residues coordinate Mg(2+): Asp8 and Glu59.

It belongs to the P-Pant transferase superfamily. AcpS family. The cofactor is Mg(2+).

The protein localises to the cytoplasm. The catalysed reaction is apo-[ACP] + CoA = holo-[ACP] + adenosine 3',5'-bisphosphate + H(+). Its function is as follows. Transfers the 4'-phosphopantetheine moiety from coenzyme A to a Ser of acyl-carrier-protein. The protein is Holo-[acyl-carrier-protein] synthase of Staphylococcus aureus (strain JH1).